We begin with the raw amino-acid sequence, 346 residues long: KH domain-containing, RNA-binding, signal transduction-associated protein 3 (346 aa).

Residues 1–160 are involved in homodimerization; that stretch reads MEEKYLPELM…IKKFLIPDYN (160 aa). Lys-4 is covalently cross-linked (Glycyl lysine isopeptide (Lys-Gly) (interchain with G-Cter in SUMO2)). The KH domain occupies 61–127; it reads LIPVKQFPKF…AKYFHLNDDL (67 aa). 2 disordered regions span residues 212 to 266 and 317 to 346; these read RPVA…QETY and GQEEWTNSRHKAPSARTAKGVYRDQPYGRY. A compositionally biased stretch (pro residues) spans 253 to 262; the sequence is GYRPPPPPPT.

It belongs to the KHDRBS family. In terms of assembly, self-associates to form homooligomers; dimerization increases RNA affinity. Interacts with KHDRBS2/SLM-1. Interacts with KHDRBS1/SAM68; heterooligomer formation of KHDRBS family proteins may modulate RNA substrate specificity. Interacts with the splicing regulatory proteins SFRS9, SAFB and YTHDC1. Interacts with HNRPL, RBMX, p85 subunit of PI3-kinase, SERPINB5. Phosphorylated on tyrosine residues by PTK6. As to expression, highly expressed in testis and brain. In adult cerebellum expressed predominantly in internal granular layer interneurons and in hippocampus is exclusively expressed in CA neurons; expression is restricted to neuronal subpopulations largely non-overlapping with expression of KHDRBS2/SLM-1.

Its subcellular location is the nucleus. Functionally, RNA-binding protein that plays a role in the regulation of alternative splicing and influences mRNA splice site selection and exon inclusion. Binds preferentially to the 5'-[AU]UAAA-3' motif in vitro. Binds optimally to RNA containing 5'-[AU]UAA-3' as a bipartite motif spaced by more than 15 nucleotides. Binds poly(A). RNA-binding abilities are down-regulated by tyrosine kinase PTK6. Involved in splice site selection of vascular endothelial growth factor. In vitro regulates CD44 alternative splicing by direct binding to purine-rich exonic enhancer. Can regulate alternative splicing of neurexins NRXN1-3 in the laminin G-like domain 6 containing the evolutionary conserved neurexin alternative spliced segment 4 (AS4) involved in neurexin selective targeting to postsynaptic partners such as neuroligins and LRRTM family members. High concentrations in forebrain structures block splicing inclusion of NRXN1-3 AS4 exons while low concentrations favor their inclusion. Targeted, cell-type specific splicing regulation of NRXN1 at AS4 is involved in neuronal glutamatergic synapse function and plasticity and is linked to behavioral aspects. Regulates expression of KHDRBS2/SLIM-1 in defined neuron populations in the hippocampus by modifying its alternative splicing resulting in a transcript predicted to undergo nonsense-mediated decay. Can bind FABP9 mRNA. May play a role as a negative regulator of cell growth. Inhibits cell proliferation. This is KH domain-containing, RNA-binding, signal transduction-associated protein 3 (Khdrbs3) from Mus musculus (Mouse).